Consider the following 492-residue polypeptide: 5-taurinomethyluridine-[tRNA] synthase subunit GTPB3, mitochondrial (492 aa).

Residues 1-20 (MWRGLSALVTQAAWAPLRLC) constitute a mitochondrion transit peptide. 5,10-methylenetetrahydrofolate contacts are provided by arginine 52, glutamate 112, and lysine 152. The region spanning 249–416 (GANVVVTGPP…LLQALKTELA (168 aa)) is the TrmE-type G domain. GTP is bound by residues 256–263 (GPPNAGKS), 282–286 (GTTRD), 303–306 (DTAG), and 374–377 (NKSD). A K(+)-binding site is contributed by asparagine 259. Mg(2+) is bound by residues serine 263 and threonine 284. Position 492 (lysine 492) interacts with 5,10-methylenetetrahydrofolate.

The protein belongs to the TRAFAC class TrmE-Era-EngA-EngB-Septin-like GTPase superfamily. TrmE GTPase family. In terms of assembly, homodimer; forms a dimer in the presence of potassium. Interacts with MTO1; forms the GTPBP3-MTO1 complex composed of homodimers of GTPBP3 and MTO1. K(+) is required as a cofactor. In terms of tissue distribution, ubiquitously expressed. Highly expressed in tissues with high metabolic rates including heart, liver and brain. Weakly expressed in skeletal muscle.

The protein localises to the mitochondrion. The enzyme catalyses GTP + H2O = GDP + phosphate + H(+). Its function is as follows. GTPase component of the GTPBP3-MTO1 complex that catalyzes the 5-taurinomethyluridine (taum(5)U) modification at the 34th wobble position (U34) of mitochondrial tRNAs (mt-tRNAs), which plays a role in mt-tRNA decoding and mitochondrial translation. Taum(5)U formation on mammalian mt-tRNA requires the presence of both GTPBP3-mediated GTPase activity and MTO1 catalytic activity. The protein is 5-taurinomethyluridine-[tRNA] synthase subunit GTPB3, mitochondrial of Mus musculus (Mouse).